We begin with the raw amino-acid sequence, 195 residues long: Large ribosomal subunit protein eL6 (195 aa).

Phosphoserine is present on residues Ser-105 and Ser-115.

This sequence belongs to the eukaryotic ribosomal protein eL6 family. As to quaternary structure, component of the large ribosomal subunit (LSU). Mature yeast ribosomes consist of a small (40S) and a large (60S) subunit. The 40S small subunit contains 1 molecule of ribosomal RNA (18S rRNA) and at least 33 different proteins. The large 60S subunit contains 3 rRNA molecules (25S, 5.8S and 5S rRNA) and at least 46 different proteins.

It is found in the cytoplasm. It localises to the nucleus. The protein resides in the nucleolus. Its function is as follows. Component of the ribosome, a large ribonucleoprotein complex responsible for the synthesis of proteins in the cell. The small ribosomal subunit (SSU) binds messenger RNAs (mRNAs) and translates the encoded message by selecting cognate aminoacyl-transfer RNA (tRNA) molecules. The large subunit (LSU) contains the ribosomal catalytic site termed the peptidyl transferase center (PTC), which catalyzes the formation of peptide bonds, thereby polymerizing the amino acids delivered by tRNAs into a polypeptide chain. The nascent polypeptides leave the ribosome through a tunnel in the LSU and interact with protein factors that function in enzymatic processing, targeting, and the membrane insertion of nascent chains at the exit of the ribosomal tunnel. This Schizosaccharomyces pombe (strain 972 / ATCC 24843) (Fission yeast) protein is Large ribosomal subunit protein eL6 (rpl6).